A 44-amino-acid chain; its full sequence is U4-ctenitoxin-Co1a (44 aa).

4 disulfides stabilise this stretch: Cys-2–Cys-19, Cys-9–Cys-25, Cys-18–Cys-39, and Cys-27–Cys-37.

As to expression, expressed by the venom gland.

Its subcellular location is the secreted. Omega-agatoxins are antagonists of voltage-gated calcium channels (Cav). Toxic to mice by intracerebroventricular injection. This is U4-ctenitoxin-Co1a from Ctenus ornatus (Brazilian spider).